Consider the following 306-residue polypeptide: Protoheme IX farnesyltransferase (306 aa).

Transmembrane regions (helical) follow at residues 31-50, 55-77, 104-124, 125-145, 168-188, 218-235, 238-258, and 286-306; these read VIEL…QGGW, LILG…NCYI, LVFA…ISNW, LAAA…TLWL, WAAV…IVFL, GRAA…ATLA, LLLI…LAGG, and ASIS…LLPF.

Belongs to the UbiA prenyltransferase family. Protoheme IX farnesyltransferase subfamily.

The protein localises to the cell membrane. It carries out the reaction heme b + (2E,6E)-farnesyl diphosphate + H2O = Fe(II)-heme o + diphosphate. Its pathway is porphyrin-containing compound metabolism; heme O biosynthesis; heme O from protoheme: step 1/1. Functionally, converts heme B (protoheme IX) to heme O by substitution of the vinyl group on carbon 2 of heme B porphyrin ring with a hydroxyethyl farnesyl side group. This chain is Protoheme IX farnesyltransferase, found in Clavibacter sepedonicus (Clavibacter michiganensis subsp. sepedonicus).